The following is a 405-amino-acid chain: S-adenosylmethionine synthase (405 aa).

Residue 141-146 (GQGSVD) coordinates ATP.

This sequence belongs to the AdoMet synthase 2 family. Mg(2+) serves as cofactor.

It catalyses the reaction L-methionine + ATP + H2O = S-adenosyl-L-methionine + phosphate + diphosphate. Its pathway is amino-acid biosynthesis; S-adenosyl-L-methionine biosynthesis; S-adenosyl-L-methionine from L-methionine: step 1/1. Functionally, catalyzes the formation of S-adenosylmethionine from methionine and ATP. The chain is S-adenosylmethionine synthase from Methanococcus maripaludis (strain C5 / ATCC BAA-1333).